An 862-amino-acid polypeptide reads, in one-letter code: C-type lectin domain-containing protein 161 (862 aa).

The first 20 residues, 1–20, serve as a signal peptide directing secretion; the sequence is MYRRTTLWFLLLFQPILVFA. 2 N-linked (GlcNAc...) asparagine glycosylation sites follow: asparagine 22 and asparagine 91. Residues 41 to 154 enclose the C-type lectin 1 domain; the sequence is SLNACFKLYN…VGQKLPFVCT (114 aa). Cysteine 62 and cysteine 153 are oxidised to a cystine. A disordered region spans residues 162–291; the sequence is AGPAPVHAMR…SDESSDEAYD (130 aa). Over residues 198-218 the composition is skewed to basic and acidic residues; it reads SDKKEKKEVASDKKKESKKDE. An N-linked (GlcNAc...) asparagine glycan is attached at asparagine 222. Residues 242–252 are compositionally biased toward basic and acidic residues; the sequence is SDKKESSKKDE. Asparagine 258, asparagine 279, and asparagine 352 each carry an N-linked (GlcNAc...) asparagine glycan. Low complexity predominate over residues 265 to 283; sequence ANAEMSASISASSANSSSD. Disordered regions lie at residues 377-437, 450-469, and 474-504; these read MTMR…SASL, ALASKSKSDSSDQSKDQKSA, and AVVSENKHPTKKPEDPKSTKTTTEEPDIDES. Low complexity predominate over residues 388 to 418; sequence SSSNTDSESASISESSQASEQAVMAAAMSAK. Composition is skewed to basic and acidic residues over residues 455–467 and 478–491; these read SKSDSSDQSKDQK and ENKHPTKKPEDPKS. N-linked (GlcNAc...) asparagine glycosylation is present at asparagine 559. C-type lectin domains follow at residues 562 to 687 and 716 to 828; these read APAL…SVLC and KNGK…FVSV. The cysteines at positions 653 and 678 are disulfide-linked. N-linked (GlcNAc...) asparagine glycosylation occurs at asparagine 765. Cysteine 807 and cysteine 819 are disulfide-bonded. Residues asparagine 831 and asparagine 857 are each glycosylated (N-linked (GlcNAc...) asparagine).

It is found in the secreted. The chain is C-type lectin domain-containing protein 161 (clec-161) from Caenorhabditis elegans.